Here is a 364-residue protein sequence, read N- to C-terminus: MSGNSIGQNFVVTTFGESHGVALGCIIDGCPPGLELTEADMQHDLDRRRPGTSRYTTARREPDEVRILSGVFEGKTTGTSIGLLIENTDQRSQDYSNIKDLFRPGHADYTYQQKYGLRDYRGGGRSSARETAMRVAAGAVAKKYLKQVHGISIQGYMSQLGPISAETLDFSQIEQNAFFFPDASKLEALDEYMRELKKSGDSIGAKISVVATGVPVGLGEPVFDRLDADIAHALMGINAVKGVEIGDGFGVVTQKGSEGRDLMSPLGFESNHAGGILGGISSGQPIVAHIALKPTSSISVPGQSMTAQGEMAEVVTKGRHDPCVGIRAVPIAEAMLAIVLMDHLLRHRAQNQDVRSHTPILGMR.

The interval 41–60 (MQHDLDRRRPGTSRYTTARR) is disordered. Residues arginine 48 and arginine 54 each coordinate NADP(+). Residues 125-127 (RSS), 238-239 (NA), glycine 278, 293-297 (KPTSS), and arginine 319 each bind FMN.

It belongs to the chorismate synthase family. As to quaternary structure, homotetramer. It depends on FMNH2 as a cofactor.

The catalysed reaction is 5-O-(1-carboxyvinyl)-3-phosphoshikimate = chorismate + phosphate. It participates in metabolic intermediate biosynthesis; chorismate biosynthesis; chorismate from D-erythrose 4-phosphate and phosphoenolpyruvate: step 7/7. In terms of biological role, catalyzes the anti-1,4-elimination of the C-3 phosphate and the C-6 proR hydrogen from 5-enolpyruvylshikimate-3-phosphate (EPSP) to yield chorismate, which is the branch point compound that serves as the starting substrate for the three terminal pathways of aromatic amino acid biosynthesis. This reaction introduces a second double bond into the aromatic ring system. The sequence is that of Chorismate synthase from Shewanella sp. (strain ANA-3).